A 215-amino-acid polypeptide reads, in one-letter code: Cytokinin riboside 5'-monophosphate phosphoribohydrolase LOG4 (215 aa).

Substrate is bound by residues Glu84, 102-103 (RK), 119-125 (GYGTLEE), and Thr131.

Belongs to the LOG family. In terms of tissue distribution, expressed in roots and shoots. Detected in root procambium, lateral root primordia, vascular tissues of cotyledons, leaves and stems, shoot apical meristem, axillary buds, young inflorescences, fruit abscission zones and basal part of ovules.

It localises to the cytoplasm. The protein localises to the nucleus. It carries out the reaction N(6)-(dimethylallyl)adenosine 5'-phosphate + H2O = N(6)-dimethylallyladenine + D-ribose 5-phosphate. The enzyme catalyses 9-ribosyl-trans-zeatin 5'-phosphate + H2O = trans-zeatin + D-ribose 5-phosphate. Cytokinin-activating enzyme working in the direct activation pathway. Phosphoribohydrolase that converts inactive cytokinin nucleotides to the biologically active free-base forms. This chain is Cytokinin riboside 5'-monophosphate phosphoribohydrolase LOG4 (LOG4), found in Arabidopsis thaliana (Mouse-ear cress).